The primary structure comprises 298 residues: Epimerase family protein SSP1921 (298 aa).

This sequence belongs to the NAD(P)-dependent epimerase/dehydratase family. SDR39U1 subfamily.

The polypeptide is Epimerase family protein SSP1921 (Staphylococcus saprophyticus subsp. saprophyticus (strain ATCC 15305 / DSM 20229 / NCIMB 8711 / NCTC 7292 / S-41)).